The chain runs to 152 residues: MEKKLSSENNQLSSENILGLLPHRYPFALVDKVIENIPGERAVAVKNVTINEPQFQGHFPERPLMPGVLIVESMAQVGGIIVTQMQNLPKGLFVFAGINNVKFRKPVVPGDQLIISCDLLSIKRQRFGKVKGEAHVDGKLVCSGELMFSLVD.

Residue His-58 is part of the active site.

This sequence belongs to the thioester dehydratase family. FabZ subfamily.

It is found in the cytoplasm. The catalysed reaction is a (3R)-hydroxyacyl-[ACP] = a (2E)-enoyl-[ACP] + H2O. Its function is as follows. Involved in unsaturated fatty acids biosynthesis. Catalyzes the dehydration of short chain beta-hydroxyacyl-ACPs and long chain saturated and unsaturated beta-hydroxyacyl-ACPs. The chain is 3-hydroxyacyl-[acyl-carrier-protein] dehydratase FabZ from Prochlorococcus marinus (strain AS9601).